The sequence spans 297 residues: Tumor necrosis factor receptor superfamily member 27 (297 aa).

The Extracellular portion of the chain corresponds to 1 to 138 (MDCQENEYRD…AHTVPPREAT (138 aa)). TNFR-Cys repeat units follow at residues 2–41 (DCQE…DAHC), 43–83 (VCPP…NAIC), and 85–118 (DCLP…EVQC). 8 cysteine pairs are disulfide-bonded: Cys-3–Cys-15, Cys-18–Cys-31, Cys-21–Cys-41, Cys-44–Cys-58, Cys-61–Cys-75, Cys-64–Cys-83, Cys-86–Cys-104, and Cys-107–Cys-118. Asn-74 and Asn-77 each carry an N-linked (GlcNAc...) asparagine glycan. A helical; Signal-anchor for type III membrane protein membrane pass occupies residues 139-159 (LVALVGSLLVVFALAFLGLFF). The Cytoplasmic segment spans residues 160–297 (LYCKQIFNRH…LYVPFEVPSL (138 aa)).

In terms of assembly, associates with TRAF1, TRAF3 and TRAF6.

Its subcellular location is the membrane. Receptor for EDA isoform A2, but not for EDA isoform A1. Mediates the activation of the NF-kappa-B and JNK pathways. Activation seems to be mediated by binding to TRAF3 and TRAF6. The protein is Tumor necrosis factor receptor superfamily member 27 (Eda2r) of Mus musculus (Mouse).